The chain runs to 452 residues: Phosphoglucosamine mutase (452 aa).

The active-site Phosphoserine intermediate is Ser-88. Mg(2+) is bound by residues Ser-88, Asp-234, Asp-236, and Asp-238. Phosphoserine is present on Ser-88.

The protein belongs to the phosphohexose mutase family. It depends on Mg(2+) as a cofactor. Post-translationally, activated by phosphorylation.

It carries out the reaction alpha-D-glucosamine 1-phosphate = D-glucosamine 6-phosphate. Functionally, catalyzes the conversion of glucosamine-6-phosphate to glucosamine-1-phosphate. This is Phosphoglucosamine mutase from Methanococcus aeolicus (strain ATCC BAA-1280 / DSM 17508 / OCM 812 / Nankai-3).